The following is a 207-amino-acid chain: Vascular endothelial growth factor B (207 aa).

The N-terminal stretch at methionine 1–alanine 21 is a signal peptide. 3 disulfides stabilise this stretch: cysteine 47–cysteine 89, cysteine 78–cysteine 122, and cysteine 82–cysteine 124. Positions lysine 129–alanine 139 are enriched in basic and acidic residues. The tract at residues lysine 129–leucine 178 is disordered.

The protein belongs to the PDGF/VEGF growth factor family. As to quaternary structure, homodimer; disulfide-linked. Can also form heterodimer with VEGF. In terms of processing, VEGF-B186 is O-glycosylated. As to expression, abundantly expressed in heart, brain, kidney and skeletal muscle.

It localises to the secreted. Functionally, growth factor for endothelial cells. VEGF-B167 binds heparin and neuropilin-1 whereas the binding to neuropilin-1 of VEGF-B186 is regulated by proteolysis. VEGF-B seems to be required for normal heart function in adult but is not required for proper development of the cardiovascular system either during development or for angiogenesis in adults. The chain is Vascular endothelial growth factor B (Vegfb) from Mus musculus (Mouse).